The following is a 285-amino-acid chain: Aquaporin-6 (285 aa).

Helical transmembrane passes span 36-56 (IFWK…VFSC), 76-96 (YCFK…ALLL), and 105-125 (ISLV…CYYG). The NPA 1 signature appears at 86–88 (NPV). Residue asparagine 128 is glycosylated (N-linked (GlcNAc...) asparagine). Transmembrane regions (helical) follow at residues 143–163 (VSPA…ILTM) and 177–197 (GDSN…SGMA). Positions 206 to 208 (NPM) match the NPA 2 motif. A helical membrane pass occupies residues 225-245 (YIYWIGPIFGCLLAVFTFDYT).

This sequence belongs to the MIP/aquaporin (TC 1.A.8) family.

The protein localises to the cell membrane. Its function is as follows. Probable water-specific aquaporin that may modulate the water content and osmolytes during anhydrobiosis. This chain is Aquaporin-6, found in Milnesium tardigradum (Water bear).